Here is a 157-residue protein sequence, read N- to C-terminus: AP-1 complex subunit sigma-2 (157 aa).

This sequence belongs to the adaptor complexes small subunit family. In terms of assembly, adaptor protein complex 1 (AP-1) is a heterotetramer composed of two large adaptins (gamma-type subunit AP1G1 and beta-type subunit AP1B1), a medium adaptin (mu-type subunit AP1M1 or AP1M2) and a small adaptin (sigma-type subunit AP1S1 or AP1S2 or AP1S3). Binds to MUC1. As to expression, widely expressed.

It is found in the golgi apparatus. The protein resides in the cytoplasmic vesicle membrane. Its subcellular location is the membrane. It localises to the clathrin-coated pit. Subunit of clathrin-associated adaptor protein complex 1 that plays a role in protein sorting in the late-Golgi/trans-Golgi network (TGN) and/or endosomes. The AP complexes mediate both the recruitment of clathrin to membranes and the recognition of sorting signals within the cytosolic tails of transmembrane cargo molecules. The sequence is that of AP-1 complex subunit sigma-2 (AP1S2) from Homo sapiens (Human).